We begin with the raw amino-acid sequence, 394 residues long: Elongation factor Tu, mitochondrial (394 aa).

The region spanning 10-204 (KPHCNIGTIG…AVDNYIPQPE (195 aa)) is the tr-type G domain. Residues 19-26 (GHVDHGKT) form a G1 region. Residue 19–26 (GHVDHGKT) coordinates GTP. The G2 stretch occupies residues 60–64 (GITIS). Positions 81–84 (DCPG) are G3. GTP is bound by residues 81-85 (DCPGH) and 136-139 (NKVD). The interval 136–139 (NKVD) is G4. The tract at residues 174-176 (SAL) is G5.

The protein belongs to the TRAFAC class translation factor GTPase superfamily. Classic translation factor GTPase family. EF-Tu/EF-1A subfamily.

The protein resides in the mitochondrion. This protein promotes the GTP-dependent binding of aminoacyl-tRNA to the A-site of ribosomes during protein biosynthesis. In Reclinomonas americana, this protein is Elongation factor Tu, mitochondrial (TUFA).